The chain runs to 155 residues: MLCPNCHQNASRVIDSRPTDEGRTIRRRRECENCGYRFTTFERVEQSPLLVIKNDGTREAFSREKILNGVAAACQKRPVTSEQLNKLVDNVENRIRAKGVSEIYSKEIGELVMDQLADIDDVAYIRFASIYRQFTDMSSFMKTMEDMMDRHSKAK.

A zinc finger lies at 3-34; that stretch reads CPNCHQNASRVIDSRPTDEGRTIRRRRECENC. One can recognise an ATP-cone domain in the interval 49-139; sequence LLVIKNDGTR…IYRQFTDMSS (91 aa).

It belongs to the NrdR family. Zn(2+) is required as a cofactor.

Negatively regulates transcription of bacterial ribonucleotide reductase nrd genes and operons by binding to NrdR-boxes. This Lactobacillus delbrueckii subsp. bulgaricus (strain ATCC 11842 / DSM 20081 / BCRC 10696 / JCM 1002 / NBRC 13953 / NCIMB 11778 / NCTC 12712 / WDCM 00102 / Lb 14) protein is Transcriptional repressor NrdR.